A 519-amino-acid chain; its full sequence is GMP synthase [glutamine-hydrolyzing] (519 aa).

Residues 4-201 (AILILDFGSQ…VHDICDAGYD (198 aa)) enclose the Glutamine amidotransferase type-1 domain. Cys81 (nucleophile) is an active-site residue. Catalysis depends on residues His175 and Glu177. The 193-residue stretch at 202–394 (WNMPDYVEEA…LGLPRDLVFR (193 aa)) folds into the GMPS ATP-PPase domain. 229–235 (SGGVDSS) lines the ATP pocket.

In terms of assembly, homodimer.

It carries out the reaction XMP + L-glutamine + ATP + H2O = GMP + L-glutamate + AMP + diphosphate + 2 H(+). The protein operates within purine metabolism; GMP biosynthesis; GMP from XMP (L-Gln route): step 1/1. Functionally, catalyzes the synthesis of GMP from XMP. This is GMP synthase [glutamine-hydrolyzing] from Nitrosomonas eutropha (strain DSM 101675 / C91 / Nm57).